Here is a 320-residue protein sequence, read N- to C-terminus: Malate dehydrogenase (320 aa).

NAD(+) is bound by residues 10–15 (GSGMIG) and Asp34. 2 residues coordinate substrate: Arg83 and Arg89. Residues Asn96 and 119-121 (ITN) each bind NAD(+). 2 residues coordinate substrate: Asn121 and Arg152. The Proton acceptor role is filled by His176.

This sequence belongs to the LDH/MDH superfamily. MDH type 3 family.

The catalysed reaction is (S)-malate + NAD(+) = oxaloacetate + NADH + H(+). Catalyzes the reversible oxidation of malate to oxaloacetate. The polypeptide is Malate dehydrogenase (Hyphomonas neptunium (strain ATCC 15444)).